A 138-amino-acid chain; its full sequence is uncharacterized protein (138 aa).

Positions 3–72 (LYSISKAAEK…LEDINEFVKD (70 aa)) constitute an HTH merR-type domain. A DNA-binding region (H-T-H motif) is located at residues 6–25 (ISKAAEKTSISSYTLRYYEK).

This is an uncharacterized protein from Bacillus subtilis (strain 168).